We begin with the raw amino-acid sequence, 123 residues long: Class II hydrophobin 2 (123 aa).

Residues Met-1–Gly-16 form the signal peptide. 4 cysteine pairs are disulfide-bonded: Cys-22/Cys-70, Cys-32/Cys-61, Cys-33/Cys-45, and Cys-71/Cys-82.

It belongs to the cerato-ulmin hydrophobin family. Homodimer. Homodimers further self-assemble to form highly ordered films at water-air interfaces through intermolecular interactions.

It localises to the secreted. The protein localises to the cell wall. Aerial growth, conidiation, and dispersal of filamentous fungi in the environment rely upon a capability of their secreting small amphipathic proteins called hydrophobins (HPBs) with low sequence identity. Class I can self-assemble into an outermost layer of rodlet bundles on aerial cell surfaces, conferring cellular hydrophobicity that supports fungal growth, development and dispersal; whereas Class II form highly ordered films at water-air interfaces through intermolecular interactions but contribute nothing to the rodlet structure. Hyd2 is a class II hydrophobin that plays probably a role in intraspecific signaling or hyphal fusion. Not necessary for root adhesion and colonization. Might play an essential role since no deletion mutants could be obtained. This is Class II hydrophobin 2 from Bionectria ochroleuca (Gliocladium roseum).